We begin with the raw amino-acid sequence, 649 residues long: Golgin subfamily A member 6-like protein 26 (649 aa).

5 disordered regions span residues Met-1–Ala-94, Gln-300–Glu-330, Glu-358–Arg-440, Lys-455–Glu-572, and Glu-584–Gln-620. Residues His-10–Pro-23 are compositionally biased toward low complexity. The segment covering Met-25 to Pro-46 has biased composition (basic and acidic residues). Polar residues-rich tracts occupy residues Gln-47–Ser-57 and Asn-65–Gly-77. The span at Ser-80–Ala-94 shows a compositional bias: basic and acidic residues. Residues Leu-151–His-644 are a coiled coil.

The protein belongs to the GOLGA6 family.

This Homo sapiens (Human) protein is Golgin subfamily A member 6-like protein 26 (GOLGA6L26).